The primary structure comprises 178 residues: Acireductone dioxygenase (178 aa).

4 residues coordinate Fe(2+): histidine 82, histidine 84, glutamate 88, and histidine 127. The Ni(2+) site is built by histidine 82, histidine 84, glutamate 88, and histidine 127. Position 157 is a phosphoserine (serine 157).

It belongs to the acireductone dioxygenase (ARD) family. Fe(2+) serves as cofactor. Requires Ni(2+) as cofactor.

The protein resides in the cytoplasm. It localises to the nucleus. The enzyme catalyses 1,2-dihydroxy-5-(methylsulfanyl)pent-1-en-3-one + O2 = 4-methylsulfanyl-2-oxobutanoate + formate + 2 H(+). It carries out the reaction 1,2-dihydroxy-5-(methylsulfanyl)pent-1-en-3-one + O2 = 3-(methylsulfanyl)propanoate + CO + formate + 2 H(+). It functions in the pathway amino-acid biosynthesis; L-methionine biosynthesis via salvage pathway; L-methionine from S-methyl-5-thio-alpha-D-ribose 1-phosphate: step 5/6. Catalyzes 2 different reactions between oxygen and the acireductone 1,2-dihydroxy-3-keto-5-methylthiopentene (DHK-MTPene) depending upon the metal bound in the active site. Fe-containing acireductone dioxygenase (Fe-ARD) produces formate and 2-keto-4-methylthiobutyrate (KMTB), the alpha-ketoacid precursor of methionine in the methionine recycle pathway. Ni-containing acireductone dioxygenase (Ni-ARD) produces methylthiopropionate, carbon monoxide and formate, and does not lie on the methionine recycle pathway. This is Acireductone dioxygenase (adi1) from Schizosaccharomyces pombe (strain 972 / ATCC 24843) (Fission yeast).